The sequence spans 335 residues: Mycobacterial beta-ketoacyl-[acyl-carrier-protein] synthase III (335 aa).

Catalysis depends on residues Cys-122 and His-258. The tract at residues 259 to 263 (QANSR) is ACP-binding. Residue Asn-289 is part of the active site.

This sequence belongs to the thiolase-like superfamily. FabH family. In terms of assembly, homodimer.

Its subcellular location is the cytoplasm. It carries out the reaction malonyl-[ACP] + dodecanoyl-CoA + H(+) = 3-oxotetradecanoyl-[ACP] + CO2 + CoA. It functions in the pathway lipid metabolism; fatty acid biosynthesis. The protein operates within lipid metabolism; mycolic acid biosynthesis. In terms of biological role, catalyzes the condensation reaction of fatty acid synthesis by the addition to an acyl acceptor of two carbons from malonyl-ACP. Catalyzes the first condensation reaction which initiates fatty acid synthesis and may therefore play a role in governing the total rate of fatty acid production. Possesses both acetoacetyl-ACP synthase and acetyl transacylase activities. Its substrate specificity determines the biosynthesis of branched-chain and/or straight-chain of fatty acids. The sequence is that of Mycobacterial beta-ketoacyl-[acyl-carrier-protein] synthase III from Mycobacterium marinum (strain ATCC BAA-535 / M).